The primary structure comprises 184 residues: MSAERLVYVMGPSGAGKDSLLAYARKHVREPRIAFAHRYITRKSDGHENHVELTRDEFAARAQLGFFALEWSSHGFRYGVGVEIDAWLAAGSVVVVSGSRAHLPAALERYPQMCVVHIDAAPHVLAERLATRGRETADEIRARLARSVRWAVPDGVALTAIDNSGTLDDAGRVLVALLEGLARS.

11 to 18 (GPSGAGKD) contributes to the ATP binding site.

This sequence belongs to the ribose 1,5-bisphosphokinase family.

The enzyme catalyses alpha-D-ribose 1,5-bisphosphate + ATP = 5-phospho-alpha-D-ribose 1-diphosphate + ADP. Its pathway is metabolic intermediate biosynthesis; 5-phospho-alpha-D-ribose 1-diphosphate biosynthesis; 5-phospho-alpha-D-ribose 1-diphosphate from D-ribose 5-phosphate (route II): step 3/3. Functionally, catalyzes the phosphorylation of ribose 1,5-bisphosphate to 5-phospho-D-ribosyl alpha-1-diphosphate (PRPP). The protein is Ribose 1,5-bisphosphate phosphokinase PhnN of Burkholderia pseudomallei (strain K96243).